The sequence spans 169 residues: Lutropin/choriogonadotropin subunit beta (169 aa).

The signal sequence occupies residues 1–20; that stretch reads MEMLQGLLLWMLLSVGGVWA. 6 disulfide bridges follow: cysteine 29/cysteine 77, cysteine 43/cysteine 92, cysteine 46/cysteine 130, cysteine 54/cysteine 108, cysteine 58/cysteine 110, and cysteine 113/cysteine 120. Asparagine 33 carries N-linked (GlcNAc...) asparagine glycosylation. Positions 131 to 169 are disordered; the sequence is APQASSSSKDPPSQPLTSTSTPTPGASNRSSHPLPIKTS. Over residues 145 to 154 the composition is skewed to low complexity; that stretch reads PLTSTSTPTP. Positions 155–169 are enriched in polar residues; the sequence is GASNRSSHPLPIKTS. A glycan (N-linked (GlcNAc...) asparagine) is linked at asparagine 158.

This sequence belongs to the glycoprotein hormones subunit beta family. Heterodimer of a common alpha chain and a unique beta chain which confers biological specificity to thyrotropin, lutropin, follitropin and gonadotropin.

It localises to the secreted. In terms of biological role, promotes spermatogenesis and ovulation by stimulating the testes and ovaries to synthesize steroids. The protein is Lutropin/choriogonadotropin subunit beta (LHB) of Equus quagga burchellii (Burchell's zebra).